The following is a 279-amino-acid chain: Stathmin domain-containing protein 1 (279 aa).

2 disordered regions span residues 1–110 (MGCG…ERPK) and 178–254 (AAEE…VAQM). The N-myristoyl glycine moiety is linked to residue G2. Positions 22 to 32 (KGWEEGSKADV) are enriched in basic and acidic residues. Positions 34–45 (VTSSKENCSPQT) are enriched in polar residues. The 128-residue stretch at 121-248 (QGIIQSRSKV…GEPLKRKKSE (128 aa)) folds into the SLD domain. Basic and acidic residues-rich tracts occupy residues 178–191 (AAEE…EEIR) and 232–242 (EKSDVQEGEPL).

This chain is Stathmin domain-containing protein 1 (Stmnd1), found in Mus musculus (Mouse).